The chain runs to 196 residues: MEELPSTAVGIRLQDGVILGAVRRLSYGGYVLSKSAKKVFPISRFGIGGAGLFGDLQALTRIMNANIKYYELYNNRPISTRAAAKLLSIILYQYKYMPFISEVLFGGVDNGEPQLYVLDPLGSLLDDIYAAVGSGARVAIGVLEAEYSEKLTLTQGRELTIKSLRASAERDVTSGDGIDILTISKDGKINTEFLSS.

Residues 1–6 (MEELPS) constitute a propeptide, removed in mature form; by autocatalysis. The active-site Nucleophile is the threonine 7.

The protein belongs to the peptidase T1B family. In terms of assembly, the 20S proteasome core is composed of 14 alpha and 14 beta subunits that assemble into four stacked heptameric rings, resulting in a barrel-shaped structure. The two inner rings, each composed of seven catalytic beta subunits, are sandwiched by two outer rings, each composed of seven alpha subunits. The catalytic chamber with the active sites is on the inside of the barrel. Has a gated structure, the ends of the cylinder being occluded by the N-termini of the alpha-subunits. Is capped at one or both ends by the proteasome regulatory ATPase, PAN.

It is found in the cytoplasm. It carries out the reaction Cleavage of peptide bonds with very broad specificity.. Its activity is regulated as follows. The formation of the proteasomal ATPase PAN-20S proteasome complex, via the docking of the C-termini of PAN into the intersubunit pockets in the alpha-rings, triggers opening of the gate for substrate entry. Interconversion between the open-gate and close-gate conformations leads to a dynamic regulation of the 20S proteasome proteolysis activity. Component of the proteasome core, a large protease complex with broad specificity involved in protein degradation. The sequence is that of Proteasome subunit beta 2 from Metallosphaera sedula (strain ATCC 51363 / DSM 5348 / JCM 9185 / NBRC 15509 / TH2).